Here is a 102-residue protein sequence, read N- to C-terminus: uncharacterized protein (102 aa).

A helical membrane pass occupies residues 29–52 (IGSTYFCFGGAIFILVAPLTNLVY).

Its subcellular location is the membrane. This is an uncharacterized protein from Saccharomyces cerevisiae (strain ATCC 204508 / S288c) (Baker's yeast).